A 513-amino-acid chain; its full sequence is Alpha-1B-glycoprotein (513 aa).

An N-terminal signal peptide occupies residues 1 to 20 (MSLLTTVLLLWGFTLGPGNA). Ig-like V-type domains lie at 22–126 (WLDS…VTGK), 127–219 (EPLP…MSAT), 220–312 (QLPP…PVEL), 313–415 (MWSD…LRIN), and 416–513 (GPAP…VEGS). Residues Asn44, Asn89, and Asn192 are each glycosylated (N-linked (GlcNAc...) asparagine). Cystine bridges form between Cys49–Cys96, Cys153–Cys195, Cys245–Cys292, Cys343–Cys392, and Cys441–Cys488. 4 N-linked (GlcNAc...) asparagine glycosylation sites follow: Asn369, Asn381, Asn389, and Asn485.

Interacts with CRISP3. As to expression, isoform 1 is expressed in normal liver. Isoform 2 is expressed in the regenerating liver after partial hepatectomy and at very low levels in the normal lung, brain and testis.

It is found in the secreted. This Rattus norvegicus (Rat) protein is Alpha-1B-glycoprotein.